Reading from the N-terminus, the 382-residue chain is Kelch domain-containing protein 3 (382 aa).

Kelch repeat units follow at residues 25–77 (RVYS…PYMR), 88–138 (TVLL…VLGK), 139–189 (IMYI…TMLG), 191–249 (HMYV…GYNG), and 251–301 (LYIF…IVGD).

As to quaternary structure, component of a CRL2(KLHDC3) complex, also named ECS(KLHDC3) complex, composed of CUL2, Elongin BC (ELOB and ELOC), RBX1 and substrate-specific adapter KLHDC3. May form oligomers as a KLHDC3-ELOB-ELOC complex; this interaction is likely autoinhibitory for the E3 ligase complex.

It localises to the cytoplasm. Its pathway is protein modification; protein ubiquitination. Substrate-recognition component of a Cul2-RING (CRL2) E3 ubiquitin-protein ligase complex of the DesCEND (destruction via C-end degrons) pathway, which recognizes a C-degron located at the extreme C terminus of target proteins, leading to their ubiquitination and degradation. The C-degron recognized by the DesCEND pathway is usually a motif of less than ten residues and can be present in full-length proteins, truncated proteins or proteolytically cleaved forms. The CRL2(KLHDC3) complex specifically recognizes proteins with a glycine (Gly) at the C-terminus, leading to their ubiquitination and degradation: recognizes the C-terminal -Arg-(Xaa)n-Arg-Gly, -Arg-(Xaa)n-Lys-Gly, and -Arg-(Xaa)n-Gln-Gly degrons. The CRL2(KLHDC3) complex mediates ubiquitination and degradation of truncated SELENOV and SEPHS2 selenoproteins produced by failed UGA/Sec decoding, which end with a glycine. May be involved in meiotic recombination process. The protein is Kelch domain-containing protein 3 of Homo sapiens (Human).